We begin with the raw amino-acid sequence, 599 residues long: Nucleosomal histone kinase 1 (599 aa).

The Protein kinase domain occupies 47–328; it reads WRIGPSIGVG…PDYDKCRSWF (282 aa). ATP-binding positions include 53 to 61 and Lys-77; that span reads IGVGGFGEI. Catalysis depends on Asp-183, which acts as the Proton acceptor. 2 disordered regions span residues 340 to 507 and 532 to 599; these read NGDL…PQPR and RKKK…KYQG. Over residues 349 to 361 the composition is skewed to polar residues; sequence PQTSSNNNLSPPG. Phosphoserine is present on residues Ser-376, Ser-381, Ser-382, Ser-388, and Ser-390. Residues 435–448 are compositionally biased toward basic and acidic residues; it reads VKTEPKSTPRERAT. Ser-483 carries the post-translational modification Phosphoserine. Residues 546 to 558 are compositionally biased toward low complexity; the sequence is SRTPSSRSALASS. Residues Ser-564 and Ser-586 each carry the phosphoserine modification. Thr-589 bears the Phosphothreonine mark.

The protein belongs to the protein kinase superfamily. CK1 Ser/Thr protein kinase family. VRK subfamily. As to quaternary structure, may interact with Unc-89 (via protein kinase domain 1). Interacts with L(2)gl. The cofactor is Mg(2+). Phosphorylated during mitosis and female meiosis. As to expression, expressed in ovaries (at protein level). Expressed in indirect flight muscle (IFM) (at protein level).

It localises to the cytoplasm. The protein localises to the nucleus. Its subcellular location is the chromosome. The protein resides in the myofibril. It is found in the sarcomere. It localises to the z line. The protein localises to the m line. It carries out the reaction L-seryl-[protein] + ATP = O-phospho-L-seryl-[protein] + ADP + H(+). The catalysed reaction is L-threonyl-[protein] + ATP = O-phospho-L-threonyl-[protein] + ADP + H(+). Serine/threonine-protein kinase involved in somatic mitosis and female meiosis. Required for spindle organization in mitosis, and for the establishment or maintenance of meiosis-specific chromosomal configurations, including the prophase I karyosome and the metaphase I spindle. Specifically phosphorylates nucleosomal H2A on 'Thr-119'. Required for the development and organization of indirect flight muscle sarcomeres by regulating the formation of M line and H zone and the correct assembly of thick and thin filaments in the sarcomere. The sequence is that of Nucleosomal histone kinase 1 (ball) from Drosophila melanogaster (Fruit fly).